The following is a 399-amino-acid chain: S-adenosylmethionine synthase (399 aa).

Residue histidine 17 participates in ATP binding. Aspartate 19 is a binding site for Mg(2+). Residue glutamate 45 participates in K(+) binding. 2 residues coordinate L-methionine: glutamate 58 and glutamine 101. The flexible loop stretch occupies residues 101–111 (QSADIAMGVDQ). ATP is bound by residues 177–179 (DGK), 244–245 (RF), aspartate 253, 259–260 (RK), alanine 276, and lysine 280. Position 253 (aspartate 253) interacts with L-methionine. Lysine 284 serves as a coordination point for L-methionine.

The protein belongs to the AdoMet synthase family. In terms of assembly, homotetramer; dimer of dimers. Mg(2+) serves as cofactor. The cofactor is K(+).

It is found in the cytoplasm. The catalysed reaction is L-methionine + ATP + H2O = S-adenosyl-L-methionine + phosphate + diphosphate. It functions in the pathway amino-acid biosynthesis; S-adenosyl-L-methionine biosynthesis; S-adenosyl-L-methionine from L-methionine: step 1/1. Its function is as follows. Catalyzes the formation of S-adenosylmethionine (AdoMet) from methionine and ATP. The overall synthetic reaction is composed of two sequential steps, AdoMet formation and the subsequent tripolyphosphate hydrolysis which occurs prior to release of AdoMet from the enzyme. The sequence is that of S-adenosylmethionine synthase from Bacillus anthracis (strain A0248).